A 459-amino-acid polypeptide reads, in one-letter code: Bifunctional protein GlmU (459 aa).

Residues 1–230 (MSNRFAVILA…FDETLGVNDR (230 aa)) form a pyrophosphorylase region. Residues 9 to 12 (LAAG), Lys-23, Gln-73, and 78 to 79 (GT) each bind UDP-N-acetyl-alpha-D-glucosamine. Asp-103 contributes to the Mg(2+) binding site. Residues Gly-140, Glu-155, Asn-170, and Asn-228 each coordinate UDP-N-acetyl-alpha-D-glucosamine. Asn-228 contacts Mg(2+). A linker region spans residues 231–251 (VALSQAEIIMKNRINRKNMVN). Residues 252–459 (GVTIIDPSNT…VDQLLNKKKS (208 aa)) form an N-acetyltransferase region. Arg-333 and Lys-351 together coordinate UDP-N-acetyl-alpha-D-glucosamine. His-363 functions as the Proton acceptor in the catalytic mechanism. UDP-N-acetyl-alpha-D-glucosamine contacts are provided by Tyr-366 and Asn-377. Acetyl-CoA-binding positions include 386–387 (NY), Ala-423, and Arg-440.

The protein in the N-terminal section; belongs to the N-acetylglucosamine-1-phosphate uridyltransferase family. This sequence in the C-terminal section; belongs to the transferase hexapeptide repeat family. Homotrimer. It depends on Mg(2+) as a cofactor.

Its subcellular location is the cytoplasm. The enzyme catalyses alpha-D-glucosamine 1-phosphate + acetyl-CoA = N-acetyl-alpha-D-glucosamine 1-phosphate + CoA + H(+). It catalyses the reaction N-acetyl-alpha-D-glucosamine 1-phosphate + UTP + H(+) = UDP-N-acetyl-alpha-D-glucosamine + diphosphate. It functions in the pathway nucleotide-sugar biosynthesis; UDP-N-acetyl-alpha-D-glucosamine biosynthesis; N-acetyl-alpha-D-glucosamine 1-phosphate from alpha-D-glucosamine 6-phosphate (route II): step 2/2. The protein operates within nucleotide-sugar biosynthesis; UDP-N-acetyl-alpha-D-glucosamine biosynthesis; UDP-N-acetyl-alpha-D-glucosamine from N-acetyl-alpha-D-glucosamine 1-phosphate: step 1/1. Its pathway is bacterial outer membrane biogenesis; LPS lipid A biosynthesis. Functionally, catalyzes the last two sequential reactions in the de novo biosynthetic pathway for UDP-N-acetylglucosamine (UDP-GlcNAc). The C-terminal domain catalyzes the transfer of acetyl group from acetyl coenzyme A to glucosamine-1-phosphate (GlcN-1-P) to produce N-acetylglucosamine-1-phosphate (GlcNAc-1-P), which is converted into UDP-GlcNAc by the transfer of uridine 5-monophosphate (from uridine 5-triphosphate), a reaction catalyzed by the N-terminal domain. This Bacillus mycoides (strain KBAB4) (Bacillus weihenstephanensis) protein is Bifunctional protein GlmU.